A 230-amino-acid chain; its full sequence is MAKADLDKDPFDVASMFDDVGKNYDLTNTVLSFGQDRVWRKRTRQRLDLKPGEKVLDLAAGTAVSTVELAKSGAFCVACDFSQGMLAAGKDRDVSKVVGDGMQLPFADNSFDAVTISYGLRNIHDFRAGLKEMARVTKPGGRLTVAEFSTPVIPVFGTVYKEYLMRLLPQVARAVSSNPEAYIYLADSIRAWPSQAELAREINQNGWSDCGWQNLTFGIVALHSAIKPEN.

S-adenosyl-L-methionine-binding positions include threonine 62, aspartate 80, 100–101 (DG), and serine 117.

It belongs to the class I-like SAM-binding methyltransferase superfamily. MenG/UbiE family.

The enzyme catalyses a 2-demethylmenaquinol + S-adenosyl-L-methionine = a menaquinol + S-adenosyl-L-homocysteine + H(+). The protein operates within quinol/quinone metabolism; menaquinone biosynthesis; menaquinol from 1,4-dihydroxy-2-naphthoate: step 2/2. Methyltransferase required for the conversion of demethylmenaquinol (DMKH2) to menaquinol (MKH2). In Corynebacterium glutamicum (strain R), this protein is Demethylmenaquinone methyltransferase.